Reading from the N-terminus, the 833-residue chain is MALIVEFICELPNGVHARPASHVETLCNTFSSQIEWHNLRTDRKGNAKSALALIGTDTLAGDNCQLLISGADEQEAHQRLSQWLRDEFPHCDAPLAEVKSDELEPLPVSLTNLNPQIIRARTVCSGSAGGILTPISSLDLNALGNLPAAKGVDAEQSALENGLTLVLKNIEFRLLDSDGATSAILEAHRSLAGDTSLREHLLAGVSAGLSCAEAIVASANHFCEEFSRSSSSYLQERALDVRDVCFQLLQQIYGEQRFPAPGKLTQPAICMADELTPSQFLELDKNHLKGLLLKSGGTTSHTVILARSFNIPTLVGVDIDALTPWQQQTIYIDGNAGAIVVEPGEAVARYYQQEARVQDALREQQRVWLTQQARTADGIRIEIAANIAHSVEAQAAFGNGAEGVGLFRTEMLYMDRTSAPGESELYNIFCQALESANGRSIIVRTMDIGGDKPVDYLNIPAEANPFLGYRAVRIYEEYASLFTTQLRSILRASAHGSLKIMIPMISSMEEILWVKEKLAEAKQQLRNEHIPFDEKIQLGIMLEVPSVMFIIDQCCEEIDFFSIGSNDLTQYLLAVDRDNAKVTRHYNSLNPAFLRALDYAVQAVHRQGKWIGLCGELGAKGSVLPLLVGLGLDELSMSAPSIPAAKARMAQLDSRECRKLLNQAMACRTSLEVEHLLAQFRMTQQDAPLVTAECITLESDWRSKEEVLKGMTDNLLLAGRCRYPRKLEADLWAREAVFSTGLGFSFAIPHSKSEHIEQSTISVARLQAPVRWGDDEAQFIIMLTLNKHAAGDQHMRIFSRLARRIMHEEFRNALVNAASADAIASLLQHELEL.

Residues 2-91 (ALIVEFICEL…QWLRDEFPHC (90 aa)) enclose the HPr domain. H16 functions as the Tele-phosphohistidine intermediate; for HPr activity in the catalytic mechanism. H16 is modified (phosphohistidine; by EI). The tract at residues 143 to 653 (LGNLPAAKGV…AAKARMAQLD (511 aa)) is PTS EI. Residue H301 is the Tele-phosphohistidine intermediate; for PTS EI activity of the active site. H301 is modified (phosphohistidine; by autocatalysis). 2 residues coordinate phosphoenolpyruvate: R408 and R444. Mg(2+)-binding residues include E543 and D567. Phosphoenolpyruvate is bound by residues 566 to 567 (ND) and R577. C614 serves as the catalytic Proton donor; for EI activity. The PTS EIIA type-2 domain maps to 688 to 830 (PLVTAECITL…DAIASLLQHE (143 aa)). The active-site Tele-phosphohistidine intermediate; for PTS EIIA activity is H750. Phosphohistidine; by HPr is present on H750.

This sequence belongs to the PEP-utilizing enzyme family. Mg(2+) serves as cofactor.

It is found in the cytoplasm. The enzyme catalyses L-histidyl-[protein] + phosphoenolpyruvate = N(pros)-phospho-L-histidyl-[protein] + pyruvate. It carries out the reaction D-fructose(out) + N(pros)-phospho-L-histidyl-[protein] = D-fructose 1-phosphate(in) + L-histidyl-[protein]. Functionally, multifunctional protein that includes general (non sugar-specific) and sugar-specific components of the phosphoenolpyruvate-dependent sugar phosphotransferase system (sugar PTS). This major carbohydrate active transport system catalyzes the phosphorylation of incoming sugar substrates concomitantly with their translocation across the cell membrane. The enzyme II FrwABC PTS system is involved in fructose transport. The sequence is that of Multiphosphoryl transfer protein 2 from Escherichia coli (strain K12).